The sequence spans 421 residues: Serine protease HTRA2, mitochondrial (421 aa).

The helical transmembrane segment at 63–81 (VIRFFVPFSLGALASTMVA) threads the bilayer. An IAP-binding motif is present at residues 74-77 (ALAS). A serine protease region spans residues 138-301 (SNGSGFVIEQ…IPIDYVKVFL (164 aa)). Residues H156, D188, and S265 each act as charge relay system in the active site. The 86-residue stretch at 324 to 409 (MGITMLTLTP…ELDIVILRGV (86 aa)) folds into the PDZ domain.

This sequence belongs to the peptidase S1C family. Interacts with th/DIAP1 (via BIR 2 domain).

The protein localises to the mitochondrion intermembrane space. The protein resides in the mitochondrion membrane. The catalysed reaction is Cleavage of non-polar aliphatic amino-acids at the P1 position, with a preference for Val, Ile and Met. At the P2 and P3 positions, Arg is selected most strongly with a secondary preference for other hydrophilic residues.. Functionally, serine protease that shows proteolytic activity against a non-specific substrate beta-casein. Promotes or induces cell death either by direct binding to and inhibition of BIRC proteins (also called inhibitor of apoptosis proteins, IAPs), leading to an increase in caspase activity, or by a BIRC inhibition-independent, caspase-independent and serine protease activity-dependent mechanism. Can antagonize antiapoptotic activity of th/Diap1 by directly inducing the degradation of th/Diap1. This is Serine protease HTRA2, mitochondrial from Drosophila virilis (Fruit fly).